Here is a 458-residue protein sequence, read N- to C-terminus: Serine--tRNA ligase (458 aa).

255-257 (TSE) contacts L-serine. Residues 286-288 (RKE) and valine 302 contribute to the ATP site. Residue glutamate 309 participates in L-serine binding. 373-376 (ELVS) contacts ATP. Threonine 409 contacts L-serine.

The protein belongs to the class-II aminoacyl-tRNA synthetase family. Type-1 seryl-tRNA synthetase subfamily. Homodimer. The tRNA molecule binds across the dimer.

It localises to the cytoplasm. The catalysed reaction is tRNA(Ser) + L-serine + ATP = L-seryl-tRNA(Ser) + AMP + diphosphate + H(+). The enzyme catalyses tRNA(Sec) + L-serine + ATP = L-seryl-tRNA(Sec) + AMP + diphosphate + H(+). Its pathway is aminoacyl-tRNA biosynthesis; selenocysteinyl-tRNA(Sec) biosynthesis; L-seryl-tRNA(Sec) from L-serine and tRNA(Sec): step 1/1. Functionally, catalyzes the attachment of serine to tRNA(Ser). Is also able to aminoacylate tRNA(Sec) with serine, to form the misacylated tRNA L-seryl-tRNA(Sec), which will be further converted into selenocysteinyl-tRNA(Sec). In Ignicoccus hospitalis (strain KIN4/I / DSM 18386 / JCM 14125), this protein is Serine--tRNA ligase.